The primary structure comprises 62 residues: Large ribosomal subunit protein uL29 (62 aa).

The protein belongs to the universal ribosomal protein uL29 family.

The sequence is that of Large ribosomal subunit protein uL29 from Trichlorobacter lovleyi (strain ATCC BAA-1151 / DSM 17278 / SZ) (Geobacter lovleyi).